Reading from the N-terminus, the 428-residue chain is 3-phosphoshikimate 1-carboxyvinyltransferase (428 aa).

Positions 22, 23, and 27 each coordinate 3-phosphoshikimate. Lysine 22 lines the phosphoenolpyruvate pocket. Phosphoenolpyruvate is bound by residues glycine 94 and arginine 122. 4 residues coordinate 3-phosphoshikimate: serine 167, glutamine 169, aspartate 314, and lysine 341. Glutamine 169 lines the phosphoenolpyruvate pocket. Aspartate 314 acts as the Proton acceptor in catalysis. Phosphoenolpyruvate is bound by residues arginine 345 and arginine 387.

It belongs to the EPSP synthase family. In terms of assembly, monomer.

It is found in the cytoplasm. It catalyses the reaction 3-phosphoshikimate + phosphoenolpyruvate = 5-O-(1-carboxyvinyl)-3-phosphoshikimate + phosphate. It participates in metabolic intermediate biosynthesis; chorismate biosynthesis; chorismate from D-erythrose 4-phosphate and phosphoenolpyruvate: step 6/7. Its function is as follows. Catalyzes the transfer of the enolpyruvyl moiety of phosphoenolpyruvate (PEP) to the 5-hydroxyl of shikimate-3-phosphate (S3P) to produce enolpyruvyl shikimate-3-phosphate and inorganic phosphate. This Geotalea uraniireducens (strain Rf4) (Geobacter uraniireducens) protein is 3-phosphoshikimate 1-carboxyvinyltransferase.